The chain runs to 622 residues: Golgin subfamily A member 6-like protein 7 (622 aa).

3 disordered regions span residues 1 to 82 (MMSE…QQAL), 251 to 496 (RKHE…RKQV), and 511 to 580 (EKMQ…HDNR). 6 stretches are compositionally biased toward basic and acidic residues: residues 57 to 74 (SPED…ENKA), 251 to 275 (RKHE…REQE), 283 to 332 (EQMR…KQEE), 339 to 367 (EQMR…KQEE), 374 to 388 (EQMR…KQEE), and 395 to 420 (EQMR…KQEE). Residues 100-534 (KTELETALHD…EKRREKKERM (435 aa)) adopt a coiled-coil conformation. Over residues 477–489 (QMGEQEEQMGEQE) the composition is skewed to acidic residues. Composition is skewed to basic and acidic residues over residues 511-546 (EKMQ…ERCS) and 567-580 (PARE…HDNR).

The protein belongs to the GOLGA6 family.

This chain is Golgin subfamily A member 6-like protein 7, found in Homo sapiens (Human).